The following is a 625-amino-acid chain: Clathrin interactor 1 (625 aa).

The ENTH domain occupies 16-149 (NVVMNYSEIE…QDDDRLREER (134 aa)). Arg-29 contributes to the a 1,2-diacyl-sn-glycero-3-phospho-(1D-myo-inositol-4,5-bisphosphate) binding site. Residues 52–54 (FMY) form an interaction with VTI1B region. Arg-67 provides a ligand contact to a 1,2-diacyl-sn-glycero-3-phospho-(1D-myo-inositol-4,5-bisphosphate). Interaction with VTI1B regions lie at residues 94-96 (SER) and 142-153 (DDRLREERKKAK). Ser-163, Ser-166, Ser-173, Ser-205, Ser-210, Ser-227, Ser-245, and Ser-299 each carry phosphoserine. The tract at residues 219 to 331 (FRRKDREDSP…SSGDLVDLFD (113 aa)) is disordered. The segment covering 222–239 (KDREDSPERCSDSDEEKK) has biased composition (basic and acidic residues). Thr-308 carries the post-translational modification Phosphothreonine. Positions 308–323 (TPQSSVKTSVPSSKSS) are enriched in low complexity. A Phosphoserine modification is found at Ser-312. The tract at residues 340 to 352 (SADLFGGFADFGS) is interaction with AP1G1, AP1G2 and GGA2. Positions 368–380 (GNGDFGDWSAFNQ) are interaction with AP1G1 and AP1G2. The residue at position 624 (Ser-624) is a Phosphoserine.

This sequence belongs to the epsin family. In terms of assembly, binds clathrin heavy chain and AP-2. Interacts with VTI1B. Interacts with GGA2 (via GAE domain). Interacts with AP1G1 (via GAE domain). Interacts with AP1G2 (via GAE domain). As to expression, ubiquitously expressed at low to intermediate levels.

It localises to the cytoplasm. The protein localises to the perinuclear region. The protein resides in the membrane. It is found in the cytoplasmic vesicle. Its subcellular location is the clathrin-coated vesicle. In terms of biological role, binds to membranes enriched in phosphatidylinositol 4,5-bisphosphate (PtdIns(4,5)P2). May have a role in transport via clathrin-coated vesicles from the trans-Golgi network to endosomes. Stimulates clathrin assembly. The protein is Clathrin interactor 1 (CLINT1) of Homo sapiens (Human).